We begin with the raw amino-acid sequence, 144 residues long: Nucleoside diphosphate kinase (144 aa).

ATP is bound by residues Lys-11, Phe-59, Arg-87, Thr-93, Arg-104, and Asn-114. The active-site Pros-phosphohistidine intermediate is the His-117.

Belongs to the NDK family. As to quaternary structure, homotetramer. The cofactor is Mg(2+).

The protein localises to the cytoplasm. It catalyses the reaction a 2'-deoxyribonucleoside 5'-diphosphate + ATP = a 2'-deoxyribonucleoside 5'-triphosphate + ADP. The catalysed reaction is a ribonucleoside 5'-diphosphate + ATP = a ribonucleoside 5'-triphosphate + ADP. Its function is as follows. Major role in the synthesis of nucleoside triphosphates other than ATP. The ATP gamma phosphate is transferred to the NDP beta phosphate via a ping-pong mechanism, using a phosphorylated active-site intermediate. The protein is Nucleoside diphosphate kinase of Baumannia cicadellinicola subsp. Homalodisca coagulata.